A 312-amino-acid polypeptide reads, in one-letter code: Glyoxylate/hydroxypyruvate reductase A (312 aa).

The active site involves Arg227. Residue His275 is the Proton donor of the active site.

The protein belongs to the D-isomer specific 2-hydroxyacid dehydrogenase family. GhrA subfamily.

The protein localises to the cytoplasm. It catalyses the reaction glycolate + NADP(+) = glyoxylate + NADPH + H(+). The catalysed reaction is (R)-glycerate + NAD(+) = 3-hydroxypyruvate + NADH + H(+). The enzyme catalyses (R)-glycerate + NADP(+) = 3-hydroxypyruvate + NADPH + H(+). Functionally, catalyzes the NADPH-dependent reduction of glyoxylate and hydroxypyruvate into glycolate and glycerate, respectively. The polypeptide is Glyoxylate/hydroxypyruvate reductase A (Escherichia fergusonii (strain ATCC 35469 / DSM 13698 / CCUG 18766 / IAM 14443 / JCM 21226 / LMG 7866 / NBRC 102419 / NCTC 12128 / CDC 0568-73)).